The chain runs to 130 residues: Fluoride-specific ion channel FluC (130 aa).

The next 4 membrane-spanning stretches (helical) occupy residues Phe3–Gly23, Gly39–Val59, Phe67–Leu87, and Ile102–Leu122. Na(+) contacts are provided by Gly77 and Thr80.

It belongs to the fluoride channel Fluc/FEX (TC 1.A.43) family.

Its subcellular location is the cell inner membrane. The catalysed reaction is fluoride(in) = fluoride(out). With respect to regulation, na(+) is not transported, but it plays an essential structural role and its presence is essential for fluoride channel function. In terms of biological role, fluoride-specific ion channel. Important for reducing fluoride concentration in the cell, thus reducing its toxicity. The polypeptide is Fluoride-specific ion channel FluC (Helicobacter pylori (strain P12)).